A 1565-amino-acid chain; its full sequence is Synemin (1565 aa).

A head region spans residues 1-10; that stretch reads MLSWRLQTGP. Residues 11–49 form a coil 1A region; it reads EKAELQELNARLYDYVCRVRELERENLLLEEELRGRRGR. An interaction with DMD and UTRN region spans residues 11-320; sequence EKAELQELNA…YRALLEGESN (310 aa). An IF rod domain is found at 11 to 322; it reads EKAELQELNA…ALLEGESNPE (312 aa). The interval 50-58 is linker 1; the sequence is EGLWAEGQA. Residues 59 to 163 form a coil 1B region; that stretch reads RCAEEARSLR…ELRARAASLT (105 aa). A linker 12 region spans residues 164–186; the sequence is MHFRARATGPAAPPPRLREVHDS. The tract at residues 187–300 is coil 2; the sequence is YALLVAESWR…LRDYQDLLQV (114 aa). A tail region spans residues 301–1565; the sequence is KTGLSLEVAT…EEEENDGHWF (1265 aa). A disordered region spans residues 401 to 421; it reads SGYSSSATTQQENSYGKAVSS. Polar residues predominate over residues 402-421; sequence GYSSSATTQQENSYGKAVSS. The residue at position 429 (serine 429) is a Phosphoserine. Residues 472–609 form a disordered region; the sequence is YRDRRDKVAA…VKDAGGGTGR (138 aa). The segment covering 498–577 has biased composition (basic and acidic residues); the sequence is KKTEVKATRE…KEKSVREREV (80 aa). Phosphothreonine occurs at positions 598 and 651. Phosphoserine is present on residues serine 653 and serine 777. Positions 1019–1040 are enriched in basic and acidic residues; sequence LSKDEASEMEKAVESVVRESLS. The tract at residues 1019-1060 is disordered; it reads LSKDEASEMEKAVESVVRESLSRQRSPAPGSPDEEGGAEAPA. Serine 1044, serine 1049, serine 1077, serine 1087, serine 1181, and serine 1184 each carry phosphoserine. Residues 1080-1105 are disordered; sequence SEVAGGASHSSGQRTPQGPVSATVEV. Polar residues predominate over residues 1087 to 1105; sequence SHSSGQRTPQGPVSATVEV. Residues 1152-1463 form an interaction with TLN1 and VCL region; the sequence is VSAGGDLSQA…GPKETSFTFQ (312 aa). Disordered regions lie at residues 1198 to 1221 and 1332 to 1415; these read EAWG…GRHS and QLGE…ETSE. The interaction with DMD and UTRN stretch occupies residues 1244–1563; sequence GKVGDYFATE…DNEEEENDGH (320 aa). Residues 1354 to 1379 are compositionally biased toward polar residues; that stretch reads ATHSHTSGRQTVMTEKSTFQSVVSES. At serine 1435 the chain carries Phosphoserine. Omega-N-methylarginine is present on arginine 1487. Residues 1505-1525 form a disordered region; it reads FKASAGEGDQAHREQGKEQAM. Residues 1513 to 1525 show a composition bias toward basic and acidic residues; that stretch reads DQAHREQGKEQAM.

Belongs to the intermediate filament family. As to quaternary structure, interacts with GFAP and VIM. Isoform 1 interacts with TLN1 and VCL. Isoform 2 interacts with DES and DTNA. Isoform 1 and isoform 2 interact with DMD and UTRN. Isoform 2 is strongly detected in adult heart, fetal skeletal muscles and fetal heart. Isoform 1 is weakly detected in fetal heart and also in fetal skeletal muscle. Isoform 1 and isoform 2 are detected in adult bladder (at protein level). The mRNA is predominantly expressed in heart and muscle with some expression in brain which may be due to tissue-specific isoforms.

The protein localises to the cytoplasm. The protein resides in the cytoskeleton. It is found in the cell junction. It localises to the adherens junction. In terms of biological role, type-VI intermediate filament (IF) which plays an important cytoskeletal role within the muscle cell cytoskeleton. It forms heteromeric IFs with desmin and/or vimentin, and via its interaction with cytoskeletal proteins alpha-dystrobrevin, dystrophin, talin-1, utrophin and vinculin, is able to link these heteromeric IFs to adherens-type junctions, such as to the costameres, neuromuscular junctions, and myotendinous junctions within striated muscle cells. In Homo sapiens (Human), this protein is Synemin.